The chain runs to 268 residues: Lipopolysaccharide core heptose(I) kinase WaaP (268 aa).

Phosphotyrosine; by autocatalysis occurs at positions 30, 48, and 98. The active site involves D163. 5 positions are modified to phosphotyrosine; by autocatalysis: Y165, Y211, Y231, Y258, and Y264.

It belongs to the protein kinase superfamily. KdkA/RfaP family. As to quaternary structure, interacts with acyl-AcpP. The WaaP hydrophobic channel can accommodate acyl chains of different lengths, but myristyl-ACP is likely its physiological binding partner. Requires Mg(2+) as cofactor.

Its subcellular location is the cytoplasm. It catalyses the reaction an L-alpha-D-Hep-(1-&gt;3)-L-alpha-D-Hep-(1-&gt;5)-[alpha-Kdo-(2-&gt;4)]-alpha-Kdo-(2-&gt;6)-lipid A + ATP = an L-alpha-D-Hep-(1-&gt;3)-4-O-phospho-L-alpha-D-Hep-(1-&gt;5)-[alpha-Kdo-(2-&gt;4)]-alpha-Kdo-(2-&gt;6)-lipid A + ADP + H(+). The enzyme catalyses L-tyrosyl-[protein] + ATP = O-phospho-L-tyrosyl-[protein] + ADP + H(+). It functions in the pathway bacterial outer membrane biogenesis; LPS core biosynthesis. Acylated-acyl carrier protein (acyl-ACP) acts as a very tightly bound cofactor necessary for the production and stability of active WaaP kinase. Functionally, kinase involved in the biosynthesis of the core oligosaccharide region of lipopolysaccharide (LPS). Catalyzes the phosphorylation of heptose I (HepI), the first heptose added to the Kdo2-lipid A module. Also has protein-tyrosine kinase activity: autophosphorylates on all Tyr residues; in vitro can phosphorylate poly(Glu,Tyr). This chain is Lipopolysaccharide core heptose(I) kinase WaaP, found in Pseudomonas aeruginosa (strain ATCC 15692 / DSM 22644 / CIP 104116 / JCM 14847 / LMG 12228 / 1C / PRS 101 / PAO1).